We begin with the raw amino-acid sequence, 347 residues long: Haptoglobin (347 aa).

A signal peptide spans 1-18; it reads MRALGAVVALLLCGQLFA. The Sushi domain occupies 31 to 88; it reads DSCPKPPEIPKGYVEHMVRYHCQTYYKLRTAGDGVYTLDSNKQWTNKVTGEKLPECEA. Cystine bridges form between cysteine 52/cysteine 86 and cysteine 90/cysteine 207. A Peptidase S1 domain is found at 103–345; sequence IMGGSLDAKG…ILDWIQTTIA (243 aa). N-linked (GlcNAc...) asparagine glycans are attached at residues asparagine 125, asparagine 151, asparagine 183, and asparagine 232. 2 disulfides stabilise this stretch: cysteine 250–cysteine 281 and cysteine 292–cysteine 322. Residues 259 to 264 form an interaction with CD163 region; the sequence is VPEKKT.

Belongs to the peptidase S1 family. In terms of assembly, tetramer of two alpha and two beta chains; disulfide-linked. The hemoglobin/haptoglobin complex is composed of a haptoglobin dimer bound to two hemoglobin alpha-beta dimers. Interacts with CD163. Interacts with ERGIC3. In terms of tissue distribution, expressed by the liver and secreted in plasma.

It localises to the secreted. Its function is as follows. As a result of hemolysis, hemoglobin is found to accumulate in the kidney and is secreted in the urine. Haptoglobin captures, and combines with free plasma hemoglobin to allow hepatic recycling of heme iron and to prevent kidney damage. Haptoglobin also acts as an antioxidant, has antibacterial activity and plays a role in modulating many aspects of the acute phase response. Hemoglobin/haptoglobin complexes are rapidly cleared by the macrophage CD163 scavenger receptor expressed on the surface of liver Kupfer cells through an endocytic lysosomal degradation pathway. This chain is Haptoglobin (HP), found in Sus scrofa (Pig).